Consider the following 230-residue polypeptide: Orotidine 5'-phosphate decarboxylase (230 aa).

Substrate contacts are provided by residues aspartate 11, lysine 34, 61–70, threonine 117, arginine 179, glutamine 188, glycine 208, and arginine 209; that span reads DLKLHDIPNT. Catalysis depends on lysine 63, which acts as the Proton donor.

This sequence belongs to the OMP decarboxylase family. Type 1 subfamily. In terms of assembly, homodimer.

The enzyme catalyses orotidine 5'-phosphate + H(+) = UMP + CO2. It participates in pyrimidine metabolism; UMP biosynthesis via de novo pathway; UMP from orotate: step 2/2. Catalyzes the decarboxylation of orotidine 5'-monophosphate (OMP) to uridine 5'-monophosphate (UMP). This chain is Orotidine 5'-phosphate decarboxylase, found in Streptococcus equi subsp. zooepidemicus (strain MGCS10565).